A 243-amino-acid polypeptide reads, in one-letter code: Voltage-gated monoatomic cation channel TMEM109 (243 aa).

Residues 1-33 form the signal peptide; sequence MAGAHSNPSWSRHLFKAVLMVLGALLLVHSASA. At 34–83 the chain is on the lumenal side; sequence QTHREFASPGQQKRESSADILTEIGRSLKETLDTWLGPETMHVISETLLQ. A helical transmembrane segment spans residues 84–104; sequence VMWAISSAISVACFALSGIAA. The Cytoplasmic portion of the chain corresponds to 105–135; that stretch reads QLLSALGLDGEQLTQVLKLSPSQVQTLLLWG. A helical transmembrane segment spans residues 136–156; that stretch reads AAALVIYWLLSLLLGLVLALL. The Lumenal portion of the chain corresponds to 157–185; that stretch reads GRILGGLKLVLFVAGFVGLVRSVPDPSTR. Residues 186–205 form a helical membrane-spanning segment; sequence ALLLLALLTVFALLSRLTGS. Residues 206–243 lie on the Cytoplasmic side of the membrane; sequence RSSGTHLEAKVRGLERQIEELRGRQRRAAKIPRSMEEE.

Homooligomer. Interacts with CRYAB; in the cellular response to DNA damage.

It is found in the nucleus outer membrane. The protein localises to the endoplasmic reticulum membrane. The protein resides in the sarcoplasmic reticulum membrane. It catalyses the reaction K(+)(in) = K(+)(out). The catalysed reaction is Ca(2+)(in) = Ca(2+)(out). Its function is as follows. Functions as a voltage-gated monoatomic cation channel permeable to both potassium and calcium. Plays a role in the cellular response to DNA damage. This Rattus norvegicus (Rat) protein is Voltage-gated monoatomic cation channel TMEM109.